A 770-amino-acid chain; its full sequence is ARF GTPase-activating protein GIT1 (770 aa).

The Arf-GAP domain occupies 1-124; sequence MSRKGPRAEV…AFVHKLPCRD (124 aa). The interval 1 to 124 is interaction with gamma-tubulin and localization to the centrosome; sequence MSRKGPRAEV…AFVHKLPCRD (124 aa). The C4-type zinc-finger motif lies at 11 to 34; the sequence is CADCSAPDPGWASISRGVLVCDEC. ANK repeat units follow at residues 132–161, 166–195, and 199–228; these read DLSK…QANF, KGTT…DPGS, and NGRT…ELTD. Tyr-224 is subject to Phosphotyrosine. The tract at residues 245-374 is interaction with PCLO; that stretch reads HYIIPQMADR…QGKSLSSPTD (130 aa). Residues 253–424 form an interaction with PTK2/FAK1 region; sequence DRSRQKCMSQ…NRARSMDSSD (172 aa). Positions 254–376 are interaction with ARHGEF7; that stretch reads RSRQKCMSQS…KSLSSPTDNL (123 aa). The disordered stretch occupies residues 363–425; sequence RQQGKSLSSP…RARSMDSSDL (63 aa). The segment covering 366 to 383 has biased composition (polar residues); the sequence is GKSLSSPTDNLELSARNQ. 2 positions are modified to phosphoserine: Ser-368 and Ser-371. Thr-373 is subject to Phosphothreonine. The segment at 375–596 is interaction with NCK2 and GRIN3A; sequence NLELSARNQS…QEGSRHASKL (222 aa). Residues 375–596 are required for localization at synapses; that stretch reads NLELSARNQS…QEGSRHASKL (222 aa). 2 positions are modified to phosphoserine: Ser-379 and Ser-384. Tyr-392 carries the post-translational modification Phosphotyrosine. Ser-394 and Ser-397 each carry phosphoserine. Residues 394–403 show a composition bias toward acidic residues; the sequence is SVASDEDTDQ. A Phosphothreonine modification is found at Thr-401. 3 positions are modified to phosphoserine: Ser-419, Ser-422, and Ser-426. The interval 420–475 is interaction with MAPK1; it reads MDSSDLSDGAVTLQEYLELKKALATSEAKVQQLMKVNSSLSDELRKLQREIHKLQA. The tract at residues 429–629 is interaction with IKBKG; that stretch reads AVTLQEYLEL…EGKRFLELSK (201 aa). The stretch at 449–483 forms a coiled coil; it reads VQQLMKVNSSLSDELRKLQREIHKLQAENLQLRQP. 2 positions are modified to phosphoserine: Ser-507 and Ser-545. Thr-546 carries the phosphothreonine modification. Phosphotyrosine occurs at positions 554 and 563. 4 positions are modified to phosphoserine: Ser-570, Ser-580, Ser-601, and Ser-605. Over residues 574–586 the composition is skewed to low complexity; it reads VTFTPSSPLLSSS. The tract at residues 574 to 615 is disordered; sequence VTFTPSSPLLSSSQEGSRHASKLSRHGSGAESDYENTQSGEP. Thr-610 carries the post-translational modification Phosphothreonine. Ser-639 carries the phosphoserine modification. Residues 646–770 are interaction with PXN and TGFB1I1; that stretch reads PGLPSTEDVI…VTITTREKKQ (125 aa).

In terms of assembly, forms homodimers and possibly oligomers. May form heterooligomers with GIT2. Interacts with G protein-coupled receptor kinases, including GRK2, GRK3, GRK5 and GRK6. Interacts with PPFIA1, PPFIA2 and PPFIA4. Interacts with GRIP1 and forms a ternary complex with PPFIA1 and GRIP1. Directly interacts with ARHGEF7/beta-PIX, forming in vitro a heptameric complex made of a GIT1 dimer and an ARHGEF7 trimer. Directly interacts with PXN/paxillin; this interaction is enhanced in the presence of ARHGEF7. Directly interacts (via C-terminus) with TGFB1I1/Hic-5 (via LD motif 3). Directly interacts with PTK2/FAK1. May interact with PTK2B/PYK2; this interaction may be indirect. Interacts with AMPA receptors GRIA2/3. Directly interacts with protein Piccolo/PCLO. Forms a complex with Ephrin-B1/EFNB1 and NCK2/GRB4 (via SH2); this interaction is important for spine morphogenesis and synapse formation. Interaction with NCK2 is transient and depends upon GIT1 phosphorylation at Tyr-392. Interacts with GRIN3A/GluN3A (via C-terminus); this interaction competes with GIT1 interaction with ARHGEF7 and limits synaptic localization of GIT1. Interacts with IKBKG/NEMO in resting bone mesenchymal stem cells, as well as in TNF-stimulated cells; this interaction may increase IKBKG affinity for 'Lys-63'-linked polyubiquitin chains. Interacts with GABA(A) receptors, including GABRB3 and GABRG2. Interacts with SCRIB. Interacts (via N- and C-terminus) with ENTR1/SDCCAG3 (via N-terminus); this interaction is direct. May form a tripartite complex with ENTR1 and PTPN13. Interacts with YWHAZ. Interacts with PAK1 and PAK3. Directly interacts (via N-terminus) with gamma-tubulin. Interacts with MAPK1 and MAPK3; this interaction is required for MAPK1/3 recruitment to focal adhesions. Phosphorylated on tyrosine residues by PTK2/FAK1 and SRC in growing fibroblasts. Phosphorylation at Tyr-392 is induced by activation of Ephrin-B1/EFNB1 and catalyzed by SRC family kinases. It is required for the interaction with NCK2 and for GIT1 recruitment to synapses in hippocampal neurons. As to expression, widely expressed. Expressed at high levels in testis (at protein level). Expressed in the brain, including in CA1 hippocampal neurons, in the amygdala, and thalamic nuclei (at protein level).

It is found in the cytoplasm. The protein resides in the synapse. The protein localises to the presynapse. Its subcellular location is the postsynapse. It localises to the postsynaptic density. It is found in the cell junction. The protein resides in the focal adhesion. The protein localises to the cell projection. Its subcellular location is the lamellipodium. It localises to the cytoskeleton. It is found in the microtubule organizing center. The protein resides in the centrosome. The protein localises to the spindle pole. Its function is as follows. GTPase-activating protein for ADP ribosylation factor family members, including ARF1. Multidomain scaffold protein that interacts with numerous proteins and therefore participates in many cellular functions, including receptor internalization, focal adhesion remodeling, and signaling by both G protein-coupled receptors and tyrosine kinase receptors. Through PAK1 activation, positively regulates microtubule nucleation during interphase. Plays a role in the regulation of cytokinesis; for this function, may act in a pathway also involving ENTR1 and PTPN13. May promote cell motility both by regulating focal complex dynamics and by the activation of RAC1. May act as scaffold for MAPK1/3 signal transduction, recruiting MAPK1/3 to focal adhesions after EGF stimulation via a Src-dependent pathway, hence stimulating cell migration. Plays a role in brain development and function. Involved in the regulation of spine density and synaptic plasticity that is required for processes involved in learning. Plays an important role in dendritic spine morphogenesis and synapse formation. In hippocampal neurons, recruits guanine nucleotide exchange factors (GEFs), such as ARHGEF7/beta-PIX, to the synaptic membrane. These in turn locally activate RAC1, which is an essential step for spine morphogenesis and synapse formation. May contribute to the organization of presynaptic active zones through oligomerization and formation of a Piccolo/PCLO-based protein network, which includes ARHGEF7/beta-PIX and FAK1. In neurons, through its interaction with liprin-alpha family members, may be required for AMPA receptor (GRIA2/3) proper targeting to the cell membrane. In complex with GABA(A) receptors and ARHGEF7, plays a crucial role in regulating GABA(A) receptor synaptic stability, maintaining GPHN/gephyrin scaffolds and hence GABAergic inhibitory synaptic transmission, by locally coordinating RAC1 and PAK1 downstream effector activity, leading to F-actin stabilization. May also be important for RAC1 downstream signaling pathway through PAK3 and regulation of neuronal inhibitory transmission at presynaptic input. Required for successful bone regeneration during fracture healing. The function in intramembranous ossification may, at least partly, exerted by macrophages in which GIT1 is a key negative regulator of redox homeostasis, IL1B production, and glycolysis, acting through the ERK1/2/NRF2/NFE2L2 axis. May also play a role in angiogenesis during fracture healing. In this process, may regulate activation of the canonical NF-kappa-B signal in bone mesenchymal stem cells by enhancing the interaction between NEMO and 'Lys-63'-ubiquitinated RIPK1/RIP1, eventually leading to enhanced production of VEGFA and others angiogenic factors. Essential for VEGF signaling through the activation of phospholipase C-gamma and ERK1/2, hence may control endothelial cell proliferation and angiogenesis. The chain is ARF GTPase-activating protein GIT1 from Rattus norvegicus (Rat).